The sequence spans 213 residues: MRAAFQSSEGFSMIKNDKAWIGDLLGGPLMSRESRVIAELLLTDPDEQTWQEQIVGHNILQASSPNTAKRYAATIRLRLNTLDKSAWTLIAEGSERERQQLLFVALMLHSPVVKDFLAEVVNDLRRQFKEKLPGNSWNEFVNSQVRLHPVLASYSDSSIAKMGNNLVKALAEAGYVDTPRRRNLQAVYLLPETQAVLQRLGQQDLISILEGKR.

Belongs to the BrxA family.

Its function is as follows. BREX systems (bacteriophage exclusion) provide immunity against bacteriophage. A probably non-essential part of a type 1 BREX system which protects against dsDNA phage. This system allows phage adsorption but prevents phage DNA replication, without degradation of the phage DNA. Methylation of bacterial DNA by PglX guides self/non-self discrimination. When the brxA-brxB-brxC-pglX-pglZ-brxL genes are transformed into a susceptible E.coli strain (BW25113) they confer very high resistance to infection by bacteriophage VR7 and VpaE1, about 100-fold protection against lambda, T5 and T7 and no protection against RNA phage Qbeta, ssDNA phage M13 or dSDNA phage T4 and VR5. Glycosylated phage DNA is not susceptible to BREX. The BREX system does not confer resistance to lysogenic lambda phage, i.e. prophage that are integrated into the chromosomal DNA and then induced to form phage. This Escherichia coli O9:H4 (strain HS) protein is BREX protein BrxA.